The sequence spans 131 residues: Ribonuclease P protein component (131 aa).

It belongs to the RnpA family. As to quaternary structure, consists of a catalytic RNA component (M1 or rnpB) and a protein subunit.

The enzyme catalyses Endonucleolytic cleavage of RNA, removing 5'-extranucleotides from tRNA precursor.. Functionally, RNaseP catalyzes the removal of the 5'-leader sequence from pre-tRNA to produce the mature 5'-terminus. It can also cleave other RNA substrates such as 4.5S RNA. The protein component plays an auxiliary but essential role in vivo by binding to the 5'-leader sequence and broadening the substrate specificity of the ribozyme. The chain is Ribonuclease P protein component from Acinetobacter baylyi (strain ATCC 33305 / BD413 / ADP1).